The primary structure comprises 508 residues: Histidine ammonia-lyase (508 aa).

Residues 143–145 constitute a cross-link (5-imidazolinone (Ala-Gly)); it reads ASG. Ser-144 carries the 2,3-didehydroalanine (Ser) modification.

It belongs to the PAL/histidase family. Contains an active site 4-methylidene-imidazol-5-one (MIO), which is formed autocatalytically by cyclization and dehydration of residues Ala-Ser-Gly.

It localises to the cytoplasm. It carries out the reaction L-histidine = trans-urocanate + NH4(+). Its pathway is amino-acid degradation; L-histidine degradation into L-glutamate; N-formimidoyl-L-glutamate from L-histidine: step 1/3. The sequence is that of Histidine ammonia-lyase from Klebsiella pneumoniae subsp. pneumoniae (strain ATCC 700721 / MGH 78578).